The sequence spans 162 residues: MKLNELRDNPGATKNRIRVGRGIGSGKGKTAGRGVKGQKSREGVSINGFEGGQMPIYRRLPKRGFNNPTRKSFAVVNLDRIQKAIDAKKLDATAVITEKALIEAGLVRRSQDGVRLLGKGELSVKVAIEVAGASATAREGVEKAGGTLTVTGAAAEAAPAAV.

The interval 1 to 44 is disordered; it reads MKLNELRDNPGATKNRIRVGRGIGSGKGKTAGRGVKGQKSREGV. The span at 21 to 35 shows a compositional bias: gly residues; that stretch reads RGIGSGKGKTAGRGV.

It belongs to the universal ribosomal protein uL15 family. As to quaternary structure, part of the 50S ribosomal subunit.

In terms of biological role, binds to the 23S rRNA. The sequence is that of Large ribosomal subunit protein uL15 from Rhodospirillum rubrum (strain ATCC 11170 / ATH 1.1.1 / DSM 467 / LMG 4362 / NCIMB 8255 / S1).